A 160-amino-acid chain; its full sequence is Calsequestrin-2 (160 aa).

It belongs to the calsequestrin family. In terms of assembly, monomer, homodimer and homooligomer. Mostly monomeric in the absence of calcium. Forms higher oligomers in a calcium-dependent manner. Dimers associate to form tetramers, that then form linear homomer chains. Interacts with ASPH and TRDN. Post-translationally, phosphorylation in the C-terminus, probably by CK2, moderately increases calcium buffering capacity. N-glycosylated.

Its subcellular location is the sarcoplasmic reticulum lumen. Functionally, calsequestrin is a high-capacity, moderate affinity, calcium-binding protein and thus acts as an internal calcium store in muscle. Calcium ions are bound by clusters of acidic residues at the protein surface, especially at the interface between subunits. Can bind around 60 Ca(2+) ions. Regulates the release of lumenal Ca(2+) via the calcium release channel RYR2; this plays an important role in triggering muscle contraction. Plays a role in excitation-contraction coupling in the heart and in regulating the rate of heart beats. The sequence is that of Calsequestrin-2 (CASQ2) from Sus scrofa (Pig).